The primary structure comprises 479 residues: (R)-1-hydroxy-2-aminoethylphosphonate ammonia-lyase (479 aa).

N6-(pyridoxal phosphate)lysine is present on lysine 317.

The protein belongs to the class-III pyridoxal-phosphate-dependent aminotransferase family. It depends on pyridoxal 5'-phosphate as a cofactor.

It carries out the reaction (1R)-(2-amino-1-hydroxyethyl)phosphonate = phosphonoacetaldehyde + NH4(+). In terms of biological role, involved in phosphonate degradation. Functions as a lyase that catalyzes an elimination reaction on the naturally occurring compound (R)-1-hydroxy-2-aminoethylphosphonate ((R)-HAEP), releasing ammonia and generating phosphonoacetaldehyde (PAA), which can be then hydrolyzed by PhnX, encoded by an adjacent gene. Thus, catalyzes a reaction that serves to funnel (R)-HAEP into the hydrolytic pathway for aminoethylphosphonate (AEP, the most common biogenic phosphonate) degradation, expanding the scope and the usefulness of the pathway itself. Is not active toward the (S) enantiomer of HAEP or other HAEP-related compounds such as ethanolamine and D,L-isoserine, indicating a very high substrate specificity. This is (R)-1-hydroxy-2-aminoethylphosphonate ammonia-lyase from Vibrio splendidus (strain 12B01).